The primary structure comprises 115 residues: Large ribosomal subunit protein bL20 (115 aa).

The protein belongs to the bacterial ribosomal protein bL20 family.

Its function is as follows. Binds directly to 23S ribosomal RNA and is necessary for the in vitro assembly process of the 50S ribosomal subunit. It is not involved in the protein synthesizing functions of that subunit. The chain is Large ribosomal subunit protein bL20 from Prochlorococcus marinus (strain MIT 9303).